The primary structure comprises 796 residues: MATDWQPECMVSQNQAALESIGAHSDRALQNTSGNVQAYSDSLAHHDTTGRDDPLQHYTLKYPHPPVPVPSHPLPTATANLYHPQLLSHRYQVKKLRRLQSNGSSYAGSRRGRSYLKSQKYLEYRARPRRDTGKDGEPVWSDELEDAFQQALEANPPMGRRKWSERGKSYGRNELIAEYIYKLTGKRRTRKQVSSHLQVLDSFLKGDPDWERLVREQSDRSTAQTQPVGPRWRTSMDHLPSSHYGTHATSSYPEPMRLMPPYSADLQLPQYSPTSTQQDTNNNTIQGLSFDMWVSAPNKPDRIDDAYHLYTRLQGDQRQPPMPLEDLKNWRVSFPHLSSSLSDVNDPLNCEIILLETNLELMDDFPPMGSRLGIHLELDIANPMSGTAPTVNQMENWTCSTYIYEDGRRTMEAYHNLTKPHTTKVKPPFESSWWAKTFTKLTQDKREAESTGHHHAADERTRRYFHSLTAVQEIRATVPPSLRRLQNHYPGSPAEESKRMAIILWKFRQTRPNEVGTTTWRKLITSPDRALTNSPRPSTAIDLPPLSLDSILLSKPTSNLYQAPPQHHDLLHQNAPSQQSWSLYQPSHDHVNSLYHSAGAFDFLNSITKPEEGLSDKTAPTSVLDPFPNLTQQTTSQTAGINVSSGTPVMLQIPDLSLSSNLGTYGLGHESHYVPSHHNAANLHDHSSTTGLGHYFAPSTQSLDEISHSHAPWSAPNTTISGDTSGGNYHHLPFTTSDHSVTVSRESHQNHSFEGLLPSDDLVGIVGGLSGDPNMNGAGPEHTSSAYAEHTAVEAV.

Positions 133–207 (GKDGEPVWSD…QVLDSFLKGD (75 aa)) form a DNA-binding region, TEA. The interval 215-254 (REQSDRSTAQTQPVGPRWRTSMDHLPSSHYGTHATSSYPE) is disordered. Positions 243–252 (HYGTHATSSY) are enriched in polar residues. The leucine-zipper-like stretch occupies residues 341–362 (LSDVNDPLNCEIILLETNLELM). Residues 612–643 (EGLSDKTAPTSVLDPFPNLTQQTTSQTAGINV) are disordered. Polar residues predominate over residues 629–643 (NLTQQTTSQTAGINV).

Belongs to the TEC1 family.

It is found in the nucleus. Its function is as follows. BrlA, abaA and wetA are pivotal regulators of conidiophore development and conidium maturation. They act individually and together to regulate their own expression and that of numerous other sporulation-specific gene. Controls temporal and spatial specificity in Aspergillus development. Directs the differentiation of phialides and is continuously required for maintenance of their function. Expression of abaA leads to activation of brlA and wetA, cessation of vegetative growth, and accentuated cellular vacuolization. Binds to the sequence 5'-CATTCY-3', where Y is a pyrimidine, making both major- and minor-groove contacts. Multiple abaA binding sites are present in the cis-acting regulatory regions of several developmentally controlled structural genes as well as those of the upstream regulatory gene brlA, the downstream regulatory gene wetA, and abaA itself. This Emericella nidulans (strain FGSC A4 / ATCC 38163 / CBS 112.46 / NRRL 194 / M139) (Aspergillus nidulans) protein is Conidiophore development regulator abaA.